The chain runs to 646 residues: Lipoteichoic acid synthase (646 aa).

The Cytoplasmic portion of the chain corresponds to 1–7 (MSLPKKK). The chain crosses the membrane as a helical span at residues 8 to 28 (IGIFAFFLLTVFTITLKTYFS). At 29–43 (YYVDFSLGVKGLVQN) the chain is on the extracellular side. A helical membrane pass occupies residues 44-64 (LILLMNPYSLIALVLSVFLFF). Residues 65–68 (KGKK) lie on the Cytoplasmic side of the membrane. Residues 69–89 (AFWFIFIGGFLLTFLLYANVV) traverse the membrane as a helical segment. Over 90-119 (YFRFFSDFLTFSTLNQAGNVESMGGAVSAS) the chain is Extracellular. The chain crosses the membrane as a helical span at residues 120 to 140 (FKWYDFVYFIDTIIYLAILIF). Topologically, residues 141 to 153 (KRKWLDNRAFSKK) are cytoplasmic. The chain crosses the membrane as a helical span at residues 154-174 (FVPVVMATSVALFFLNLAFAE). The Extracellular portion of the chain corresponds to 175-646 (TDRPELLTRT…KSGPKGNEKK (472 aa)). The Mn(2+) site is built by E255 and T300. T300 is a catalytic residue. Residue H416 participates in substrate binding. Residues D475 and H476 each coordinate Mn(2+).

The protein belongs to the LTA synthase family. Post-translationally, proteolytically cleaved.

It is found in the cell membrane. The protein resides in the secreted. Its pathway is cell wall biogenesis; lipoteichoic acid biosynthesis. Catalyzes the polymerization of lipoteichoic acid (LTA) polyglycerol phosphate, a reaction that presumably uses phosphatidylglycerol (PG) as substrate. Is required for staphylococcal growth and cell division process. This chain is Lipoteichoic acid synthase (ltaS), found in Staphylococcus epidermidis (strain ATCC 35984 / DSM 28319 / BCRC 17069 / CCUG 31568 / BM 3577 / RP62A).